A 199-amino-acid polypeptide reads, in one-letter code: DnaJ homolog subfamily C member 5B (199 aa).

S14 and S16 each carry phosphoserine. The region spanning 19 to 84 is the J domain; sequence ALYEILGLQK…SKRNIYDKYG (66 aa).

As to quaternary structure, interacts with the chaperone complex consisting of HSC70 and SGTA. In terms of processing, palmitoylated.

The protein resides in the membrane. This chain is DnaJ homolog subfamily C member 5B (DNAJC5B), found in Ailuropoda melanoleuca (Giant panda).